Consider the following 549-residue polypeptide: Dihydroxy-acid dehydratase (549 aa).

Residue D78 participates in Mg(2+) binding. C119 contributes to the [2Fe-2S] cluster binding site. Residues D120 and K121 each contribute to the Mg(2+) site. N6-carboxylysine is present on K121. C191 is a binding site for [2Fe-2S] cluster. E441 contacts Mg(2+). S466 (proton acceptor) is an active-site residue.

This sequence belongs to the IlvD/Edd family. As to quaternary structure, homodimer. The cofactor is [2Fe-2S] cluster. Mg(2+) serves as cofactor.

It catalyses the reaction (2R)-2,3-dihydroxy-3-methylbutanoate = 3-methyl-2-oxobutanoate + H2O. The enzyme catalyses (2R,3R)-2,3-dihydroxy-3-methylpentanoate = (S)-3-methyl-2-oxopentanoate + H2O. It participates in amino-acid biosynthesis; L-isoleucine biosynthesis; L-isoleucine from 2-oxobutanoate: step 3/4. The protein operates within amino-acid biosynthesis; L-valine biosynthesis; L-valine from pyruvate: step 3/4. Functions in the biosynthesis of branched-chain amino acids. Catalyzes the dehydration of (2R,3R)-2,3-dihydroxy-3-methylpentanoate (2,3-dihydroxy-3-methylvalerate) into 2-oxo-3-methylpentanoate (2-oxo-3-methylvalerate) and of (2R)-2,3-dihydroxy-3-methylbutanoate (2,3-dihydroxyisovalerate) into 2-oxo-3-methylbutanoate (2-oxoisovalerate), the penultimate precursor to L-isoleucine and L-valine, respectively. The chain is Dihydroxy-acid dehydratase from Methanobrevibacter smithii (strain ATCC 35061 / DSM 861 / OCM 144 / PS).